The following is a 1224-amino-acid chain: ATP-dependent helicase/deoxyribonuclease subunit B (1224 aa).

The 326-residue stretch at 1-326 folds into the UvrD-like helicase ATP-binding domain; sequence MSLRFILGRA…VCAAANRRSE (326 aa). 8–15 lines the ATP pocket; that stretch reads GRAGTGKS. One can recognise a UvrD-like helicase C-terminal domain in the interval 283–584; sequence QSAPRFQHPE…KLSLIPPELD (302 aa). [4Fe-4S] cluster-binding residues include Cys841, Cys1176, Cys1179, and Cys1185.

Belongs to the helicase family. AddB/RexB type 1 subfamily. Heterodimer of AddA and AddB. Mg(2+) is required as a cofactor. The cofactor is [4Fe-4S] cluster.

The heterodimer acts as both an ATP-dependent DNA helicase and an ATP-dependent, dual-direction single-stranded exonuclease. Recognizes the chi site generating a DNA molecule suitable for the initiation of homologous recombination. The AddB subunit has 5' -&gt; 3' nuclease activity but not helicase activity. This chain is ATP-dependent helicase/deoxyribonuclease subunit B, found in Heliobacterium modesticaldum (strain ATCC 51547 / Ice1).